Reading from the N-terminus, the 291-residue chain is Arabinogalactan O-methyltransferase 2 (291 aa).

Residues 18-38 form a helical membrane-spanning segment; it reads WFLAVALAGLIGGAMLITSFI.

The protein belongs to the methyltransferase superfamily.

It is found in the golgi apparatus membrane. Functionally, involved in the methylation of glucuronic acid of different plant cell wall component, but mainly on side chains of arabinogalactans. The protein is Arabinogalactan O-methyltransferase 2 of Arabidopsis thaliana (Mouse-ear cress).